We begin with the raw amino-acid sequence, 208 residues long: Probable GTP-binding protein EngB (208 aa).

An EngB-type G domain is found at 22–195; the sequence is GLPEIALAGR…WGALEDIFVE (174 aa). Residues 30-37, 57-61, 75-78, 142-145, and 174-176 contribute to the GTP site; these read GRSNVGKS, GKTRT, DLPG, TKSD, and ISS. Mg(2+) contacts are provided by serine 37 and threonine 59.

This sequence belongs to the TRAFAC class TrmE-Era-EngA-EngB-Septin-like GTPase superfamily. EngB GTPase family. Mg(2+) serves as cofactor.

Necessary for normal cell division and for the maintenance of normal septation. In Alkaliphilus metalliredigens (strain QYMF), this protein is Probable GTP-binding protein EngB.